A 230-amino-acid polypeptide reads, in one-letter code: Protein FAM3A (230 aa).

The signal sequence occupies residues 1-33; sequence MRLAGPLRIVALIIIMGLTWILVTILLGGPGVG. Disulfide bonds link cysteine 59–cysteine 87 and cysteine 65–cysteine 222. A GG-type lectin domain is found at 68–226; sequence EHLSFRIVSG…LEMEGCIPRR (159 aa).

It belongs to the FAM3 family.

It localises to the secreted. The chain is Protein FAM3A (Fam3a) from Mus musculus (Mouse).